A 462-amino-acid polypeptide reads, in one-letter code: L-seryl-tRNA(Sec) selenium transferase (462 aa).

The residue at position 295 (Lys295) is an N6-(pyridoxal phosphate)lysine.

The protein belongs to the SelA family. Homodecamer; pentamer of dimers. Binds only one seryl-tRNA(Sec) per dimer. Pyridoxal 5'-phosphate serves as cofactor.

It is found in the cytoplasm. It catalyses the reaction L-seryl-tRNA(Sec) + selenophosphate + H(+) = L-selenocysteinyl-tRNA(Sec) + phosphate. Its pathway is aminoacyl-tRNA biosynthesis; selenocysteinyl-tRNA(Sec) biosynthesis; selenocysteinyl-tRNA(Sec) from L-seryl-tRNA(Sec) (bacterial route): step 1/1. Converts seryl-tRNA(Sec) to selenocysteinyl-tRNA(Sec) required for selenoprotein biosynthesis. This Klebsiella pneumoniae subsp. pneumoniae (strain ATCC 700721 / MGH 78578) protein is L-seryl-tRNA(Sec) selenium transferase.